A 280-amino-acid polypeptide reads, in one-letter code: Ribosomal RNA small subunit methyltransferase A (280 aa).

Residues Asn28, Leu30, Gly55, Glu77, Asp103, and Asn122 each contribute to the S-adenosyl-L-methionine site.

Belongs to the class I-like SAM-binding methyltransferase superfamily. rRNA adenine N(6)-methyltransferase family. RsmA subfamily.

It is found in the cytoplasm. It carries out the reaction adenosine(1518)/adenosine(1519) in 16S rRNA + 4 S-adenosyl-L-methionine = N(6)-dimethyladenosine(1518)/N(6)-dimethyladenosine(1519) in 16S rRNA + 4 S-adenosyl-L-homocysteine + 4 H(+). Specifically dimethylates two adjacent adenosines (A1518 and A1519) in the loop of a conserved hairpin near the 3'-end of 16S rRNA in the 30S particle. May play a critical role in biogenesis of 30S subunits. In Ruegeria sp. (strain TM1040) (Silicibacter sp.), this protein is Ribosomal RNA small subunit methyltransferase A.